The primary structure comprises 67 residues: uncharacterized protein (67 aa).

Helical transmembrane passes span 10–32 (NLSH…TAFI) and 44–66 (ATLT…MGQW).

The protein localises to the cell membrane. This is an uncharacterized protein from Archaeoglobus fulgidus (strain ATCC 49558 / DSM 4304 / JCM 9628 / NBRC 100126 / VC-16).